We begin with the raw amino-acid sequence, 491 residues long: Probable cytosol aminopeptidase (491 aa).

2 residues coordinate Mn(2+): Lys260 and Asp265. Lys272 is a catalytic residue. Mn(2+)-binding residues include Asp284, Asp343, and Glu345. Arg347 is a catalytic residue.

This sequence belongs to the peptidase M17 family. Mn(2+) is required as a cofactor.

It localises to the cytoplasm. The catalysed reaction is Release of an N-terminal amino acid, Xaa-|-Yaa-, in which Xaa is preferably Leu, but may be other amino acids including Pro although not Arg or Lys, and Yaa may be Pro. Amino acid amides and methyl esters are also readily hydrolyzed, but rates on arylamides are exceedingly low.. The enzyme catalyses Release of an N-terminal amino acid, preferentially leucine, but not glutamic or aspartic acids.. In terms of biological role, presumably involved in the processing and regular turnover of intracellular proteins. Catalyzes the removal of unsubstituted N-terminal amino acids from various peptides. The sequence is that of Probable cytosol aminopeptidase from Rippkaea orientalis (strain PCC 8801 / RF-1) (Cyanothece sp. (strain PCC 8801)).